Reading from the N-terminus, the 546-residue chain is Glucose-6-phosphate isomerase (546 aa).

Catalysis depends on glutamate 357, which acts as the Proton donor. Residues histidine 389 and lysine 509 contribute to the active site.

This sequence belongs to the GPI family.

It localises to the cytoplasm. The enzyme catalyses alpha-D-glucose 6-phosphate = beta-D-fructose 6-phosphate. It functions in the pathway carbohydrate biosynthesis; gluconeogenesis. It participates in carbohydrate degradation; glycolysis; D-glyceraldehyde 3-phosphate and glycerone phosphate from D-glucose: step 2/4. Functionally, catalyzes the reversible isomerization of glucose-6-phosphate to fructose-6-phosphate. This Anaeromyxobacter sp. (strain K) protein is Glucose-6-phosphate isomerase.